The chain runs to 301 residues: Homoserine kinase (301 aa).

81-91 serves as a coordination point for ATP; sequence RPSSGLGSSAA.

Belongs to the GHMP kinase family. Homoserine kinase subfamily.

Its subcellular location is the cytoplasm. The enzyme catalyses L-homoserine + ATP = O-phospho-L-homoserine + ADP + H(+). Its pathway is amino-acid biosynthesis; L-threonine biosynthesis; L-threonine from L-aspartate: step 4/5. Its function is as follows. Catalyzes the ATP-dependent phosphorylation of L-homoserine to L-homoserine phosphate. This chain is Homoserine kinase, found in Halobacterium salinarum (strain ATCC 29341 / DSM 671 / R1).